A 381-amino-acid chain; its full sequence is MSKRDFYEVLGVGRDASERDIKKAYKRLAMKFHPDRNQGDESAADKFKEVKEAYEILTDPQKKAAYDQYGHAAFEQGGGFGGGGFGGGGADFGDIFGDVFGDIFGGGRRGGGQQRAQRGADLRYNMELSLEEAVRGVSKEIEVPTLVHCDTCDGSGAKKGSSAETCGTCHGHGQVQMRQGFFAVQQTCPTCHGKGKIIKDPCNECHGQGRKQKTKTLNVKIPAGVDTGDRIRLSGEGEAGEMGAPAGDLYVQVHVREHHIFEREGNNLYCEVPVSFAMAALGGEVEVPTLDGRVNLKVPTETQTGRMFRMRGKGVKGVRGGGVGDLIVKLVVETPVNLSSRQKELLKEFDESCGGDAATKHKPKSEGFFNGVKKFFDDLTS.

One can recognise a J domain in the interval aspartate 5–glycine 70. The segment at glycine 136 to threonine 214 adopts a CR-type zinc-finger fold. Residues cysteine 149, cysteine 152, cysteine 166, cysteine 169, cysteine 188, cysteine 191, cysteine 202, and cysteine 205 each contribute to the Zn(2+) site. 4 CXXCXGXG motif repeats span residues cysteine 149 to glycine 156, cysteine 166 to glycine 173, cysteine 188 to glycine 195, and cysteine 202 to glycine 209.

The protein belongs to the DnaJ family. In terms of assembly, homodimer. The cofactor is Zn(2+).

It localises to the cytoplasm. In terms of biological role, participates actively in the response to hyperosmotic and heat shock by preventing the aggregation of stress-denatured proteins and by disaggregating proteins, also in an autonomous, DnaK-independent fashion. Unfolded proteins bind initially to DnaJ; upon interaction with the DnaJ-bound protein, DnaK hydrolyzes its bound ATP, resulting in the formation of a stable complex. GrpE releases ADP from DnaK; ATP binding to DnaK triggers the release of the substrate protein, thus completing the reaction cycle. Several rounds of ATP-dependent interactions between DnaJ, DnaK and GrpE are required for fully efficient folding. Also involved, together with DnaK and GrpE, in the DNA replication of plasmids through activation of initiation proteins. The polypeptide is Chaperone protein DnaJ (Vibrio campbellii (strain ATCC BAA-1116)).